Consider the following 805-residue polypeptide: MSHEKNEASGYPEAQSWKSQEAMLGARTEVSRWRAVKNCLYRHLVKVLGEDWIFLLLLGALMALVSWAMDFIGSRGLRFYKYLFALVEGNIGLQYLVWVCYPLALILFSSLFCQIVSPQAVGSGIPELKTIIRGAVLHEYLTLRTFVAKTVGLTVALSAGFPLGKEGPFVHIASICATLLNQLLCFISGRREEPYYLRADILTVGCALGISCCFGTPLAGVLFSIEVTCSHFGVRSYWRGFLGGAFSAFIFRVLSVWVKDTVTLTALFKTNFRGDIPFDLQEMPAFAIIGIASGFFGALFVYLNRQIIVFMRKKNFVTKILKKQRLIYPAVVTFVLATLRFPPGVGQFFGAGLMPRETINSLFDNYTWTKTIDPRGLGNSAQWFIPHLNIFIVMALYFVMHFWMAALAVTMPVPCGAFVPVFNLGAVLGRFVGELMALLFPDGLVSNGNLYHILPGEYAVIGAAAMTGAVTHAVSTAVICFELTGQISHVLPMMVAVILANMVAQGLQPSLYDSIIQIKKLPYLPELSWSSANKYNIQVGDIMVRDVTSIASTSTYGDLLHVLRQTKLKFFPFVDTPDTNTLLGSIDRTEVEGLLQRRISAYRRQPAAAAEADEEGRNGETGASFTGEAESSFAYIDQEDAEGQQREGLEAVKVQTEDPRPPSPVPAEEPTQTSGIYQKKQKGTGQVASRFEEMLTLEEIYRWEQREKNVVVNFETCRIDQSPFQLVEGTSLQKTHTLFSLLGLDRAYVTSMGKLVGVVALAEIQAAIEGSYQKGFRLPPPLASFRDVKHARNSGRTATSNSSGK.

The Cytoplasmic segment spans residues Met-1 to Leu-48. Transmembrane regions (helical) follow at residues Gly-49–Leu-86 and Leu-93–Val-116. The Selectivity filter part_1 motif lies at Gly-122–Pro-126. A chloride-binding site is contributed by Ser-123. The segment at residues Ile-125–Ile-132 is an intramembrane region (helical). A run of 2 helical transmembrane segments spans residues Leu-141 to Ala-159 and Glu-166 to Leu-184. Residues Gly-164–Pro-168 carry the Selectivity filter part_2 motif. Intramembrane regions (helical) lie at residues Ile-201–Cys-213 and Pro-217–Ile-225. 3 helical membrane-spanning segments follow: residues Tyr-237–Val-256, Met-283–Met-311, and Ile-320–Leu-339. Asn-365 is a glycosylation site (N-linked (GlcNAc...) asparagine). The next 2 helical transmembrane spans lie at Leu-388–Ala-408 and Gly-416–Leu-439. The Selectivity filter part_3 signature appears at Gly-416 to Pro-420. Position 418 (Phe-418) interacts with chloride. An intramembrane region (helical) is located at residues Gly-456–Val-470. Positions Thr-471–His-472 form an intramembrane region, note=Loop between two helices. The segment at residues Ala-473 to Thr-484 is an intramembrane region (helical). The note=Loop between two helices intramembrane region spans Gly-485–His-489. A helical transmembrane segment spans residues Val-490–Leu-507. Residues Gln-508–Lys-805 lie on the Cytoplasmic side of the membrane. Tyr-512 is a chloride binding site. Residues Met-543–Ala-601 enclose the CBS 1 domain. Disordered stretches follow at residues Pro-606–Phe-625 and Lys-653–Thr-684. One can recognise a CBS 2 domain in the interval Ile-719 to Phe-776.

This sequence belongs to the chloride channel (TC 2.A.49) family. ClC-0 subfamily. As to quaternary structure, homodimer. Each subunit contains a channel ('Double barreled channel').

It localises to the membrane. Voltage-gated chloride channel. This channel is thought to ensure the high conductance of the non-innervated membrane of the electrocyte necessary for efficient current generation caused by sodium influx through the acetylcholine receptor at the innervated membrane. In Torpedo marmorata (Marbled electric ray), this protein is Chloride channel protein.